The sequence spans 543 residues: Probable protein kinase UbiB (543 aa).

In terms of domain architecture, Protein kinase spans 123-501 (DFDSQALASA…QQRQGQSRYL (379 aa)). ATP-binding positions include 129–137 (LASASIAQV) and Lys-152. Asp-287 serves as the catalytic Proton acceptor. The helical transmembrane segment at 517–539 (LADATEVSTGFIVAGALAWFIGW) threads the bilayer.

The protein belongs to the ABC1 family. UbiB subfamily.

It is found in the cell inner membrane. It participates in cofactor biosynthesis; ubiquinone biosynthesis [regulation]. Its function is as follows. Is probably a protein kinase regulator of UbiI activity which is involved in aerobic coenzyme Q (ubiquinone) biosynthesis. The chain is Probable protein kinase UbiB from Yersinia pseudotuberculosis serotype O:1b (strain IP 31758).